The sequence spans 252 residues: Pyrroloquinoline-quinone synthase (252 aa).

It belongs to the PqqC family.

The catalysed reaction is 6-(2-amino-2-carboxyethyl)-7,8-dioxo-1,2,3,4,7,8-hexahydroquinoline-2,4-dicarboxylate + 3 O2 = pyrroloquinoline quinone + 2 H2O2 + 2 H2O + H(+). It functions in the pathway cofactor biosynthesis; pyrroloquinoline quinone biosynthesis. In terms of biological role, ring cyclization and eight-electron oxidation of 3a-(2-amino-2-carboxyethyl)-4,5-dioxo-4,5,6,7,8,9-hexahydroquinoline-7,9-dicarboxylic-acid to PQQ. This Acinetobacter baumannii (strain ACICU) protein is Pyrroloquinoline-quinone synthase.